Consider the following 431-residue polypeptide: 23S rRNA (uracil(1939)-C(5))-methyltransferase RlmD (431 aa).

The TRAM domain maps to 10–68 (RVTTRQIITVKVNDLDSFGQGVARHNGKALFIPGLLPEESAEVIITEDKKQFARARVSR). Residues C81, C87, C90, and C161 each contribute to the [4Fe-4S] cluster site. Residues Q264, F293, N298, E314, N341, and D362 each contribute to the S-adenosyl-L-methionine site. Catalysis depends on C388, which acts as the Nucleophile.

It belongs to the class I-like SAM-binding methyltransferase superfamily. RNA M5U methyltransferase family. RlmD subfamily.

The catalysed reaction is uridine(1939) in 23S rRNA + S-adenosyl-L-methionine = 5-methyluridine(1939) in 23S rRNA + S-adenosyl-L-homocysteine + H(+). Its function is as follows. Catalyzes the formation of 5-methyl-uridine at position 1939 (m5U1939) in 23S rRNA. The chain is 23S rRNA (uracil(1939)-C(5))-methyltransferase RlmD from Salmonella typhi.